The primary structure comprises 298 residues: NFU1 iron-sulfur cluster scaffold homolog, mitochondrial (298 aa).

The segment at 190–258 is nifU; sequence IKELLDTRIR…IPEVESVEQV (69 aa). Cysteine 227 and cysteine 230 together coordinate [4Fe-4S] cluster. The segment covering 279 to 288 has biased composition (polar residues); the sequence is QKESVNQPNA. Residues 279–298 form a disordered region; sequence QKESVNQPNAPVNIGGGTPN.

This sequence belongs to the NifU family.

It localises to the mitochondrion. In terms of biological role, molecular scaffold for [Fe-S] cluster assembly of mitochondrial iron-sulfur proteins. This is NFU1 iron-sulfur cluster scaffold homolog, mitochondrial from Drosophila virilis (Fruit fly).